Consider the following 622-residue polypeptide: WD repeat-containing protein 70 (622 aa).

Residues 37-55 (TAVERSKKTLEAREKEEQI) are compositionally biased toward basic and acidic residues. The disordered stretch occupies residues 37–141 (TAVERSKKTL…DNPVKGIPDS (105 aa)). Residues 67–84 (SSSRQKNTDTSSSSSGSE) are compositionally biased toward low complexity. The span at 120–132 (SDDEDEEQHEDDD) shows a compositional bias: acidic residues. WD repeat units follow at residues 148 to 187 (HGTK…ASLQ), 195 to 236 (CECH…ECVK), 249 to 289 (GHTA…KHKG), 298 to 337 (GKRV…HTKF), 344 to 383 (TPGT…NPLN), 389 to 434 (ANYF…KVYE), and 437 to 476 (VTEA…QRGA). Positions 508-533 (REPRQRSTRKQLEKDRLDPVKSHKPE) are enriched in basic and acidic residues. Disordered stretches follow at residues 508 to 549 (REPR…GTHG) and 602 to 622 (AEVE…KRKI). Positions 539 to 549 (PGRGGRVGTHG) are enriched in gly residues. The span at 604–614 (VESDEEETDNE) shows a compositional bias: acidic residues.

This sequence belongs to the WD repeat GAD-1 family.

This is WD repeat-containing protein 70 (wdr70) from Xenopus tropicalis (Western clawed frog).